We begin with the raw amino-acid sequence, 195 residues long: Probable GTP-binding protein EngB (195 aa).

The region spanning 22 to 194 (LKGEVAFVGR…LDLISTLLKE (173 aa)) is the EngB-type G domain. GTP contacts are provided by residues 30–37 (GRSNVGKS), 56–60 (GKTRS), 74–77 (DLPG), 141–144 (TKMD), and 173–175 (TSS). Mg(2+) is bound by residues S37 and T58.

This sequence belongs to the TRAFAC class TrmE-Era-EngA-EngB-Septin-like GTPase superfamily. EngB GTPase family. Requires Mg(2+) as cofactor.

In terms of biological role, necessary for normal cell division and for the maintenance of normal septation. This chain is Probable GTP-binding protein EngB, found in Thermotoga sp. (strain RQ2).